A 285-amino-acid polypeptide reads, in one-letter code: Glutamate racemase (285 aa).

Substrate contacts are provided by residues Asp-28–Ser-29 and Tyr-60–Gly-61. The active-site Proton donor/acceptor is the Cys-92. Asn-93–Thr-94 provides a ligand contact to substrate. The active-site Proton donor/acceptor is Cys-204. Substrate is bound at residue Thr-205–His-206.

It belongs to the aspartate/glutamate racemases family.

It carries out the reaction L-glutamate = D-glutamate. The protein operates within cell wall biogenesis; peptidoglycan biosynthesis. Functionally, provides the (R)-glutamate required for cell wall biosynthesis. The chain is Glutamate racemase from Escherichia fergusonii (strain ATCC 35469 / DSM 13698 / CCUG 18766 / IAM 14443 / JCM 21226 / LMG 7866 / NBRC 102419 / NCTC 12128 / CDC 0568-73).